The following is a 95-amino-acid chain: Large ribosomal subunit protein uL23 (95 aa).

Belongs to the universal ribosomal protein uL23 family. Part of the 50S ribosomal subunit. Contacts protein L29, and trigger factor when it is bound to the ribosome.

Its function is as follows. One of the early assembly proteins it binds 23S rRNA. One of the proteins that surrounds the polypeptide exit tunnel on the outside of the ribosome. Forms the main docking site for trigger factor binding to the ribosome. The polypeptide is Large ribosomal subunit protein uL23 (Fusobacterium nucleatum subsp. nucleatum (strain ATCC 25586 / DSM 15643 / BCRC 10681 / CIP 101130 / JCM 8532 / KCTC 2640 / LMG 13131 / VPI 4355)).